An 88-amino-acid chain; its full sequence is Gene 86 protein (88 aa).

The interval 64–88 is disordered; sequence WRGNPSAYDDEVGDLEGFETQHSDY. Residues 71–80 are compositionally biased toward acidic residues; sequence YDDEVGDLEG.

The chain is Gene 86 protein (86) from Mycobacterium (Mycobacteriophage L5).